A 1169-amino-acid polypeptide reads, in one-letter code: Protein qua-1 (1169 aa).

Residues 1-22 (MRRLSAILPILLLSNFWPTVES) form the signal peptide. Disordered stretches follow at residues 261–338 (GATG…AGTN) and 368–933 (AGGV…RTSS). Low complexity predominate over residues 278-292 (ESNGNNNNSFEGGRS). The segment covering 312–337 (GAGGKGGAGADGAAGSGAGAGAGAGT) has biased composition (gly residues). Acidic residues-rich tracts occupy residues 426–437 (DEEDEEDNGDED) and 453–464 (DDGDGDEDDDGT). A compositionally biased stretch (basic and acidic residues) spans 511 to 523 (SPDDNDLLEKDEN). Gly residues-rich tracts occupy residues 526–536 (NGKGGAGNGNG), 545–572 (KGNG…GTGD), 605–634 (DGNG…GSGD), 656–700 (GSNG…GGTG), and 727–752 (NAEG…GAGG). The span at 753-774 (KGDKSDSESGNEADGKDGKKNE) shows a compositional bias: basic and acidic residues. Residues 775–791 (GAGGEAAAGSGGANKGG) are compositionally biased toward gly residues. Residues 793-803 (DGDDDDVDVTD) are compositionally biased toward acidic residues. The segment covering 840 to 855 (GTVQTGAKHNAESSAS) has biased composition (polar residues). The segment covering 889–906 (SGTSESVTNGSGATESGS) has biased composition (low complexity). Residues 907-923 (TGSGTTGTGTSGTGSSG) show a composition bias toward gly residues. A compositionally biased stretch (low complexity) spans 924–933 (TGASAARTSS).

As to expression, transiently expressed in head cells.

It localises to the cytoplasmic vesicle. It is found in the secreted. The protein localises to the extracellular space. Its subcellular location is the extracellular matrix. Functionally, required for cuticle shedding and normal alae morphology and localization, and subsequently larval development. This is Protein qua-1 from Caenorhabditis elegans.